The chain runs to 486 residues: Arginine/agmatine antiporter (486 aa).

The next 12 helical transmembrane spans lie at 12–32 (LGAIALAGMVISSMIGGGIFS), 41–61 (AGVGAIILAWILTGVGMFFIA), 85–105 (GFGPYIGFTIGWGYWLCQIFG), 132–152 (PAILGGSILIWVFNFIVLKGI), 160–180 (IIGTVGKLVPLIVFIIITAFL), 211–231 (STMLVTLWAFIGIEGAVVMSA), 242–262 (ATILGFTGCLTVYILLSILPF), 296–316 (VGLLIAVLSSWLSWTMIVAEI), 341–361 (VSLYVTSALMQIAMLLVYFST), 367–387 (MLSITGVMVLPAYFASAAFLV), 418–438 (IWLIYAGGLKYLLMAIILLAL), and 461–481 (EVTEITIIAFLALLAIFLFST).

The protein belongs to the amino acid-polyamine-organocation (APC) superfamily. Basic amino acid/polyamine antiporter (APA) (TC 2.A.3.2) family.

It localises to the cell inner membrane. In terms of biological role, catalyzes the exchange of L-arginine for agmatine. The arginine uptake by the bacterium in the macrophage may be a virulence factor against the host innate immune response. This Chlamydia abortus (strain DSM 27085 / S26/3) (Chlamydophila abortus) protein is Arginine/agmatine antiporter (aaxC).